Reading from the N-terminus, the 313-residue chain is Ribosomal RNA small subunit methyltransferase H (313 aa).

S-adenosyl-L-methionine contacts are provided by residues Gly-34–His-36, Asp-54, Phe-81, Asp-102, and Gln-109. The segment at Ile-289–Gly-313 is disordered.

This sequence belongs to the methyltransferase superfamily. RsmH family.

It is found in the cytoplasm. It catalyses the reaction cytidine(1402) in 16S rRNA + S-adenosyl-L-methionine = N(4)-methylcytidine(1402) in 16S rRNA + S-adenosyl-L-homocysteine + H(+). In terms of biological role, specifically methylates the N4 position of cytidine in position 1402 (C1402) of 16S rRNA. The polypeptide is Ribosomal RNA small subunit methyltransferase H (Trichlorobacter lovleyi (strain ATCC BAA-1151 / DSM 17278 / SZ) (Geobacter lovleyi)).